The primary structure comprises 270 residues: Interleukin-2 receptor subunit alpha (270 aa).

A signal peptide spans 1 to 21 (MEPSLLMWGFFTFTMIPGCMA). A Sushi 1 domain is found at 22 to 84 (GACVQQPPSL…FWENKCQCMP (63 aa)). Residues 22–245 (GACVQQPPSL…QPIIFTTQYQ (224 aa)) are Extracellular-facing. Disulfide bonds link Cys-24-Cys-67, Cys-49-Cys-80, and Cys-51-Cys-82. 2 N-linked (GlcNAc...) asparagine glycosylation sites follow: Asn-33 and Asn-70. The disordered stretch occupies residues 87-124 (SPRIPVKQVTPRPEEQKERKTTETQGQMQPPNQANLPG). Basic and acidic residues predominate over residues 98-108 (RPEEQKERKTT). The span at 112 to 121 (GQMQPPNQAN) shows a compositional bias: polar residues. The Sushi 2 domain maps to 124–191 (GHCKEPPPWE…WTQPKLKCKS (68 aa)). Intrachain disulfides connect Cys-126–Cys-171 and Cys-153–Cys-189. N-linked (GlcNAc...) asparagine glycosylation is found at Asn-164 and Asn-195. The disordered stretch occupies residues 190-225 (KSEKENGSFPEPQMSTAAPPTTKTSLPTRTKGTTDS). Positions 202 to 225 (QMSTAAPPTTKTSLPTRTKGTTDS) are enriched in polar residues. Residue Asn-227 is glycosylated (N-linked (GlcNAc...) asparagine). Residues 246–264 (LAVAGCVLLLLSILLLSGL) traverse the membrane as a helical segment. Over 265-270 (TWQRRR) the chain is Cytoplasmic.

As to quaternary structure, non-covalent dimer of an alpha and a beta subunit. IL2R exists in 3 different forms: a high affinity dimer, an intermediate affinity monomer (beta subunit), and a low affinity monomer (alpha subunit). The high and intermediate affinity forms also associate with a gamma subunit.

The protein resides in the membrane. Functionally, receptor for interleukin-2. The receptor is involved in the regulation of immune tolerance by controlling regulatory T cells (TREGs) activity. TREGs suppress the activation and expansion of autoreactive T-cells. This is Interleukin-2 receptor subunit alpha (IL2RA) from Sus scrofa (Pig).